The chain runs to 489 residues: mRNA cleavage and polyadenylation factor CLP1 (489 aa).

Residues Glu-28 and 152–157 contribute to the ATP site; that span reads YSGKTT.

It belongs to the Clp1 family. Clp1 subfamily. Component of a pre-mRNA cleavage factor complex. Interacts directly with PCF11.

Its subcellular location is the nucleus. Required for endonucleolytic cleavage during polyadenylation-dependent pre-mRNA 3'-end formation. The chain is mRNA cleavage and polyadenylation factor CLP1 from Candida albicans (strain SC5314 / ATCC MYA-2876) (Yeast).